The following is a 294-amino-acid chain: Ribosomal RNA small subunit methyltransferase H (294 aa).

Residues 37–39, Asp58, Leu93, Asp105, and Gln112 contribute to the S-adenosyl-L-methionine site; that span reads GGH.

Belongs to the methyltransferase superfamily. RsmH family.

The protein resides in the cytoplasm. It carries out the reaction cytidine(1402) in 16S rRNA + S-adenosyl-L-methionine = N(4)-methylcytidine(1402) in 16S rRNA + S-adenosyl-L-homocysteine + H(+). Its function is as follows. Specifically methylates the N4 position of cytidine in position 1402 (C1402) of 16S rRNA. The sequence is that of Ribosomal RNA small subunit methyltransferase H from Fervidobacterium nodosum (strain ATCC 35602 / DSM 5306 / Rt17-B1).